A 243-amino-acid chain; its full sequence is Ribosomal RNA small subunit methyltransferase G (243 aa).

Residues Gly-80, Phe-85, 132-133 (IE), and Arg-151 each bind S-adenosyl-L-methionine.

It belongs to the methyltransferase superfamily. RNA methyltransferase RsmG family.

The protein localises to the cytoplasm. In terms of biological role, specifically methylates the N7 position of a guanine in 16S rRNA. In Synechococcus sp. (strain CC9902), this protein is Ribosomal RNA small subunit methyltransferase G.